Reading from the N-terminus, the 191-residue chain is Potassium-transporting ATPase KdpC subunit (191 aa).

The helical transmembrane segment at 8–28 threads the bilayer; it reads LFLFLLLLLVTGLAYPLLTTV.

This sequence belongs to the KdpC family. The system is composed of three essential subunits: KdpA, KdpB and KdpC.

The protein resides in the cell inner membrane. Functionally, part of the high-affinity ATP-driven potassium transport (or Kdp) system, which catalyzes the hydrolysis of ATP coupled with the electrogenic transport of potassium into the cytoplasm. This subunit acts as a catalytic chaperone that increases the ATP-binding affinity of the ATP-hydrolyzing subunit KdpB by the formation of a transient KdpB/KdpC/ATP ternary complex. In Pectobacterium atrosepticum (strain SCRI 1043 / ATCC BAA-672) (Erwinia carotovora subsp. atroseptica), this protein is Potassium-transporting ATPase KdpC subunit.